A 124-amino-acid chain; its full sequence is Large ribosomal subunit protein bL21 (124 aa).

The protein belongs to the bacterial ribosomal protein bL21 family. In terms of assembly, part of the 50S ribosomal subunit. Contacts protein L20.

Functionally, this protein binds to 23S rRNA in the presence of protein L20. This Sinorhizobium medicae (strain WSM419) (Ensifer medicae) protein is Large ribosomal subunit protein bL21.